A 367-amino-acid polypeptide reads, in one-letter code: Damage-control phosphatase At2g17340 (367 aa).

Met-1 is subject to N-acetylmethionine. Positions 220, 221, and 256 each coordinate Mn(2+). The Subfamily II EGMGR motif motif lies at 318-322 (EGMGR).

The protein belongs to the damage-control phosphatase family. Phosphopantetheine phosphatase II subfamily. In terms of assembly, multimer. Requires Mn(2+) as cofactor. Ni(2+) serves as cofactor.

Activity is strongly promoted by Co(2+), Ni(2+), Mg(2+), Cu(2+) and Mn(2+). Activity is inhibited by EDTA. In terms of biological role, metal-dependent phosphatase with probable damage-control functions. Shows phosphatase activity against several substrates, including sugar phosphates and p-nitrophenyl phosphate(pNPP). Prefers sugar phosphate substrates, including the extremely potent glycating agents ribose-5-phosphate and erythrose-4-phosphate. This Arabidopsis thaliana (Mouse-ear cress) protein is Damage-control phosphatase At2g17340.